Consider the following 427-residue polypeptide: ATP-sensitive inward rectifier potassium channel 12 (427 aa).

The Cytoplasmic segment spans residues methionine 1–aspartate 77. The residue at position 75 (cysteine 75) is an S-nitrosocysteine. The chain crosses the membrane as a helical span at residues isoleucine 78 to valine 104. 2 residues coordinate a 1,2-diacyl-sn-glycero-3-phospho-(1D-myo-inositol-4,5-bisphosphate): arginine 79 and arginine 81. Residues isoleucine 105 to glycine 129 are Extracellular-facing. Residues cysteine 123 and cysteine 155 are joined by a disulfide bond. The segment at residues phenylalanine 130 to tyrosine 146 is an intramembrane region (helical; Pore-forming). The K(+) site is built by threonine 143, isoleucine 144, glycine 145, and tyrosine 146. The Selectivity filter signature appears at threonine 143–leucine 148. Over glycine 147–cysteine 155 the chain is Extracellular. A helical transmembrane segment spans residues proline 156 to lysine 183. A 1,2-diacyl-sn-glycero-3-phospho-(1D-myo-inositol-4,5-bisphosphate) is bound by residues lysine 183 and lysine 188. The Cytoplasmic portion of the chain corresponds to methionine 184–isoleucine 427. A disordered region spans residues aspartate 387–isoleucine 427. The span at alanine 393–arginine 409 shows a compositional bias: basic and acidic residues. The PDZ-binding motif lies at serine 425–isoleucine 427.

It belongs to the inward rectifier-type potassium channel (TC 1.A.2.1) family. KCNJ12 subfamily. In terms of assembly, homotetramer. Forms heteromer with KCNJ4. Can form heteromeric channels with Kir2.6/KCNJ18. Association, via its PDZ-recognition domain, with LIN7A, LIN7B, LIN7C, DLG1, CASK and APBA1 plays a key role in its localization and trafficking. As to expression, highest level in cerebellum.

It is found in the membrane. The protein resides in the cell membrane. It localises to the sarcolemma. Its subcellular location is the T-tubule. It carries out the reaction K(+)(in) = K(+)(out). Its activity is regulated as follows. Activated by phosphatidylinositol 4,5-biphosphate (PtdIns(4,5)P2). PtdIns(4,5)P2 binding to the cytoplasmic side of the channel triggers a conformation change leading to channel opening. Inhibited by Ba(2+). Its function is as follows. Inward rectifying potassium channel that probably participates in controlling the resting membrane potential in electrically excitable cells. It probably participates in establishing action potential waveform and excitability of neuronal and muscle tissues. Inward rectifier potassium channels are characterized by a greater tendency to allow potassium to flow into the cell rather than out of it. Their voltage dependence is regulated by the concentration of extracellular potassium; as external potassium is raised, the voltage range of the channel opening shifts to more positive voltages. The inward rectification is mainly due to the blockage of outward current by internal magnesium. In Mus musculus (Mouse), this protein is ATP-sensitive inward rectifier potassium channel 12 (Kcnj12).